The sequence spans 398 residues: Galactose-3-O-sulfotransferase 2 (398 aa).

The Cytoplasmic portion of the chain corresponds to 1–11 (MLSALGGLQRC). A helical; Signal-anchor for type II membrane protein membrane pass occupies residues 12 to 29 (FWAILLLALTVSLLAGFL). Over 30 to 398 (HKDVRLLMPL…PPKNIPFLGA (369 aa)) the chain is Lumenal. 6 N-linked (GlcNAc...) asparagine glycosylation sites follow: N77, N133, N180, N288, N330, and N360.

It belongs to the galactose-3-O-sulfotransferase family.

The protein resides in the golgi apparatus. It localises to the golgi stack membrane. It functions in the pathway protein modification; carbohydrate sulfation. Strongly inhibited by Cu(2+) and Zn(2+). Its function is as follows. Transfers a sulfate group to the hydroxyl group at C3 of non-reducing beta-galactosyl residues. Acts both on type 1 (Gal-beta-1,3-GlcNAc) and type 2 (Gal-beta-1,4-GlcNAc) chains with similar efficiency. This Sus scrofa (Pig) protein is Galactose-3-O-sulfotransferase 2 (GAL3ST2).